Consider the following 653-residue polypeptide: 4-alpha-glucanotransferase (653 aa).

Catalysis depends on E123, which acts as the Nucleophile. Residue D214 is the Proton donor of the active site.

The protein belongs to the glycosyl hydrolase 57 family.

It catalyses the reaction Transfers a segment of a (1-&gt;4)-alpha-D-glucan to a new position in an acceptor, which may be glucose or a (1-&gt;4)-alpha-D-glucan.. The chain is 4-alpha-glucanotransferase from Thermococcus kodakarensis (strain ATCC BAA-918 / JCM 12380 / KOD1) (Pyrococcus kodakaraensis (strain KOD1)).